We begin with the raw amino-acid sequence, 138 residues long: Sec-independent protein translocase protein TatB (138 aa).

Residues 1 to 21 form a helical membrane-spanning segment; sequence MFDIGATELLVIAIVAILVIG. A disordered region spans residues 74–138; that stretch reads MAKHPADQMQ…EPRLPLEGRD (65 aa). Residues 83 to 97 are compositionally biased toward low complexity; the sequence is QPLDAPDPALSAAEA. A compositionally biased stretch (basic and acidic residues) spans 98-138; sequence RAAHTEAAKPARAAEETQADRASADEHPAASEPRLPLEGRD.

Belongs to the TatB family. The Tat system comprises two distinct complexes: a TatABC complex, containing multiple copies of TatA, TatB and TatC subunits, and a separate TatA complex, containing only TatA subunits. Substrates initially bind to the TatABC complex, which probably triggers association of the separate TatA complex to form the active translocon.

Its subcellular location is the cell inner membrane. Part of the twin-arginine translocation (Tat) system that transports large folded proteins containing a characteristic twin-arginine motif in their signal peptide across membranes. Together with TatC, TatB is part of a receptor directly interacting with Tat signal peptides. TatB may form an oligomeric binding site that transiently accommodates folded Tat precursor proteins before their translocation. The protein is Sec-independent protein translocase protein TatB of Erythrobacter litoralis (strain HTCC2594).